Here is an 837-residue protein sequence, read N- to C-terminus: Espin (837 aa).

9 ANK repeats span residues M1–L31, L35–R66, N69–E99, S103–A132, T137–A167, N171–L201, D205–Q235, D238–Q267, and W270–V299. 2 positions are modified to phosphoserine: S337 and S341. Positions D339–Q348 are enriched in basic and acidic residues. Disordered regions lie at residues D339 to H459, D477 to L712, K745 to L767, and E785 to Y816. The segment covering S351–P364 has biased composition (polar residues). Low complexity predominate over residues L376 to T395. Phosphoserine occurs at positions 400 and 401. A compositionally biased stretch (pro residues) spans S423–P455. S497, S504, and S531 each carry phosphoserine. A compositionally biased stretch (pro residues) spans L581–P604. Positions S617–S626 are enriched in low complexity. 2 stretches are compositionally biased toward polar residues: residues F627–N636 and P651–F662. Residue S631 is modified to Phosphoserine. The region spanning D635–T652 is the WH2 domain. The span at S663–E673 shows a compositional bias: low complexity. Residues S670, S674, and S680 each carry the phosphoserine modification. Residues K738–L814 are a coiled coil.

Monomer. Interacts with PFN2. Binds F-actin in a Ca(2+)-resistant fashion. Interacts (via N-terminal) with BAIAP2 (via SH3-domain). Interacts with MYO3A (via C-terminus). Interacts with MYO3B (via C-terminus). As to expression, expressed at high concentration in the microvillar parallel actin bundle (PAB) of hair cells stereocilia in the cochlea and vestibular system. Detected also at high levels of a number of other sensory cell types, including taste receptor cells, solitary chemoreceptor cells, vomeronasal sensory neurons and Merkel cells. Isoform 1 is detected in testis. Isoforms 2 is detected in small intestine and kidney (at protein level). Isoforms 3, 4, 6 and 8 are expressed in Purkinje cells dendritic spines.

Its subcellular location is the cytoplasm. It localises to the cytoskeleton. The protein resides in the cell projection. It is found in the stereocilium. The protein localises to the microvillus. Its subcellular location is the cell junction. It localises to the dendritic spine. Its function is as follows. Multifunctional actin-bundling protein. Plays a major role in regulating the organization, dimension, dynamics and signaling capacities of the actin filament-rich microvilli in the mechanosensory and chemosensory cells. Required for the assembly and stabilization of the stereociliary parallel actin bundles. Plays a crucial role in the formation and maintenance of inner ear hair cell stereocilia. Involved in the elongation of actin in stereocilia. In extrastriolar hair cells, required for targeting MYO3B to stereocilia tips, and for regulation of stereocilia diameter and staircase formation. This is Espin (Espn) from Rattus norvegicus (Rat).